Here is a 600-residue protein sequence, read N- to C-terminus: MREISVPAPFTVGEHDNVAAMVFEHERDDPDYVIYQRLIDGVWTDVTCAEAANQIRAAALGLISLGVQAGDRVVIFSATRYEWAILDFAILAVGAVTVPTYETSSAEQVRWVLQDSEAVVLFAETDSHATMVAELSGSVPALREVLQIAGSGPNALDRLTEAGASVDPAELTARLAALRSTDPATLIYTSGTTGRPKGCQLTQSNLVHEIKGARAYHPTLLRKGERLLVFLPLAHVLARAISMAAFHSKVTVGFTSDIKNLLPMLAVFKPTVVVSVPRVFEKVYNTAEQNAANAGKGRIFAIAAQTAVDWSEACDRGGPGLLLRAKHAVFDRLVYRKLRAALGGNCRAAVSGGAPLGARLGHFYRGAGLTIYEGYGLSGTSGGVAISQFNDLKIGTVGKPVPGNSLRIADDGELLVRGGVVFSGYWRNEQATTEAFTDGWFKTGDLGAVDEDGFLTITGRKKEIIVTAGGKNVAPAVLEDQLRAHPLISQAVVVGDAKPFIGALITIDPEAFEGWKQRNSKTAGASVGDLATDPDLIAEIDAAVKQANLAVSHAESIRKFRILPVDFTEDTGELTPTMKVKRKVVAEKFASDIEAIYNKE.

Belongs to the ATP-dependent AMP-binding enzyme family.

It carries out the reaction a long-chain fatty acid + ATP + CoA = a long-chain fatty acyl-CoA + AMP + diphosphate. The catalysed reaction is dodecanoate + ATP + CoA = dodecanoyl-CoA + AMP + diphosphate. The enzyme catalyses hexadecanoate + ATP + CoA = hexadecanoyl-CoA + AMP + diphosphate. The protein operates within lipid metabolism; fatty acid biosynthesis. In terms of biological role, catalyzes the activation of long-chain fatty acids as acyl-coenzyme A (acyl-CoA), which are then transferred to the multifunctional polyketide synthase (PKS) type III for further chain extension. The polypeptide is Long-chain-fatty-acid--CoA ligase FadD15 (fadD15) (Mycobacterium tuberculosis (strain ATCC 25618 / H37Rv)).